Here is a 399-residue protein sequence, read N- to C-terminus: Dual-specificity RNA methyltransferase RlmN (399 aa).

The Proton acceptor role is filled by E122. The Radical SAM core domain occupies 128-371 (ETDRGTLCVS…VRTPRGRDIL (244 aa)). Cysteines 135 and 374 form a disulfide. The [4Fe-4S] cluster site is built by C142, C146, and C149. S-adenosyl-L-methionine-binding positions include 200 to 201 (GE), S232, 254 to 256 (SLH), and N331. Residue C374 is the S-methylcysteine intermediate of the active site.

This sequence belongs to the radical SAM superfamily. RlmN family. The cofactor is [4Fe-4S] cluster.

It is found in the cytoplasm. It carries out the reaction adenosine(2503) in 23S rRNA + 2 reduced [2Fe-2S]-[ferredoxin] + 2 S-adenosyl-L-methionine = 2-methyladenosine(2503) in 23S rRNA + 5'-deoxyadenosine + L-methionine + 2 oxidized [2Fe-2S]-[ferredoxin] + S-adenosyl-L-homocysteine. The enzyme catalyses adenosine(37) in tRNA + 2 reduced [2Fe-2S]-[ferredoxin] + 2 S-adenosyl-L-methionine = 2-methyladenosine(37) in tRNA + 5'-deoxyadenosine + L-methionine + 2 oxidized [2Fe-2S]-[ferredoxin] + S-adenosyl-L-homocysteine. Its function is as follows. Specifically methylates position 2 of adenine 2503 in 23S rRNA and position 2 of adenine 37 in tRNAs. m2A2503 modification seems to play a crucial role in the proofreading step occurring at the peptidyl transferase center and thus would serve to optimize ribosomal fidelity. In Rhodopseudomonas palustris (strain TIE-1), this protein is Dual-specificity RNA methyltransferase RlmN.